The sequence spans 224 residues: Imidazoleglycerol-phosphate dehydratase (224 aa).

Belongs to the imidazoleglycerol-phosphate dehydratase family.

It carries out the reaction D-erythro-1-(imidazol-4-yl)glycerol 3-phosphate = 3-(imidazol-4-yl)-2-oxopropyl phosphate + H2O. Its pathway is amino-acid biosynthesis; L-histidine biosynthesis; L-histidine from 5-phospho-alpha-D-ribose 1-diphosphate: step 6/9. In Cyberlindnera jadinii (Torula yeast), this protein is Imidazoleglycerol-phosphate dehydratase (HIS3).